The following is a 79-amino-acid chain: Small ribosomal subunit protein bS18 (79 aa).

This sequence belongs to the bacterial ribosomal protein bS18 family. In terms of assembly, part of the 30S ribosomal subunit. Forms a tight heterodimer with protein bS6.

Functionally, binds as a heterodimer with protein bS6 to the central domain of the 16S rRNA, where it helps stabilize the platform of the 30S subunit. The protein is Small ribosomal subunit protein bS18 of Listeria innocua serovar 6a (strain ATCC BAA-680 / CLIP 11262).